The primary structure comprises 251 residues: tRNA (guanine-N(7)-)-methyltransferase (251 aa).

E69, E94, D121, and D143 together coordinate S-adenosyl-L-methionine. The active site involves D143. Positions 147 and 179 each coordinate substrate.

The protein belongs to the class I-like SAM-binding methyltransferase superfamily. TrmB family.

The enzyme catalyses guanosine(46) in tRNA + S-adenosyl-L-methionine = N(7)-methylguanosine(46) in tRNA + S-adenosyl-L-homocysteine. Its pathway is tRNA modification; N(7)-methylguanine-tRNA biosynthesis. In terms of biological role, catalyzes the formation of N(7)-methylguanine at position 46 (m7G46) in tRNA. The chain is tRNA (guanine-N(7)-)-methyltransferase from Rhodopseudomonas palustris (strain BisB18).